Here is a 450-residue protein sequence, read N- to C-terminus: Phosphoglucosamine mutase (450 aa).

Catalysis depends on S102, which acts as the Phosphoserine intermediate. Mg(2+) contacts are provided by S102, D242, D244, and D246. The residue at position 102 (S102) is a Phosphoserine.

It belongs to the phosphohexose mutase family. The cofactor is Mg(2+). Post-translationally, activated by phosphorylation.

It catalyses the reaction alpha-D-glucosamine 1-phosphate = D-glucosamine 6-phosphate. Its function is as follows. Catalyzes the conversion of glucosamine-6-phosphate to glucosamine-1-phosphate. In Staphylococcus haemolyticus (strain JCSC1435), this protein is Phosphoglucosamine mutase.